Here is a 933-residue protein sequence, read N- to C-terminus: Protein FAM83G (933 aa).

4 disordered regions span residues 339 to 375 (KSAS…QEQK), 450 to 716 (TECQ…SSSV), 870 to 899 (WGPS…FGIP), and 911 to 933 (TKMG…HKDQ). Residues 452 to 466 (CQKGSETSQEQTSSK) are compositionally biased toward polar residues. 2 stretches are compositionally biased toward basic and acidic residues: residues 467–480 (VETH…EKSG) and 503–514 (SKVDQGRMEHSP). Polar residues-rich tracts occupy residues 515–531 (SKAT…QSMD) and 538–580 (SPSQ…SSVA). Over residues 590–609 (KEPVKDTVDELEDTSIKDPP) the composition is skewed to basic and acidic residues. Residues 651–660 (KNAQNANIGS) are compositionally biased toward polar residues. The span at 702 to 716 (SSGSGSLPPSSSSSV) shows a compositional bias: low complexity. Residues 875 to 886 (AANQPSPLTSNP) show a composition bias toward polar residues.

It belongs to the FAM83 family. As to quaternary structure, interacts with SMAD1 (via MH2 domain); in a SMAD4-independent manner.

It localises to the cytoplasm. It is found in the cytosol. The protein resides in the nucleus. Its function is as follows. Substrate for type I BMP receptor kinase involved in regulation of some target genes of the BMP signaling pathway. May also play a role in other signaling pathways. The polypeptide is Protein FAM83G (fam83g) (Xenopus laevis (African clawed frog)).